The following is a 198-amino-acid chain: Pyridoxal 5'-phosphate synthase subunit PdxT (198 aa).

52-54 (GES) is a binding site for L-glutamine. Cysteine 84 functions as the Nucleophile in the catalytic mechanism. L-glutamine contacts are provided by residues arginine 116 and 143 to 144 (IR). Active-site charge relay system residues include histidine 179 and glutamate 181.

The protein belongs to the glutaminase PdxT/SNO family. In the presence of PdxS, forms a dodecamer of heterodimers. Only shows activity in the heterodimer.

The catalysed reaction is aldehydo-D-ribose 5-phosphate + D-glyceraldehyde 3-phosphate + L-glutamine = pyridoxal 5'-phosphate + L-glutamate + phosphate + 3 H2O + H(+). It carries out the reaction L-glutamine + H2O = L-glutamate + NH4(+). It functions in the pathway cofactor biosynthesis; pyridoxal 5'-phosphate biosynthesis. Catalyzes the hydrolysis of glutamine to glutamate and ammonia as part of the biosynthesis of pyridoxal 5'-phosphate. The resulting ammonia molecule is channeled to the active site of PdxS. This is Pyridoxal 5'-phosphate synthase subunit PdxT from Caldivirga maquilingensis (strain ATCC 700844 / DSM 13496 / JCM 10307 / IC-167).